The chain runs to 494 residues: DNA-directed DNA/RNA polymerase mu (494 aa).

A disordered region spans residues 1–24; that stretch reads MLPKRRRARVGSPSGDAASSTPPS. Ser12 carries the post-translational modification Phosphoserine. Residues 22–122 enclose the BRCT domain; that stretch reads PPSTRFPGVA…QPVPVECRHR (101 aa). The involved in ssDNA binding stretch occupies residues 323 to 332; it reads RGKLQGHDVD. The Mg(2+) site is built by Asp330, Asp332, and Asp418.

It belongs to the DNA polymerase type-X family. Requires Mg(2+) as cofactor. As to expression, expressed in a number of tissues. Abundant in thymus.

It localises to the nucleus. It carries out the reaction DNA(n) + a 2'-deoxyribonucleoside 5'-triphosphate = DNA(n+1) + diphosphate. Gap-filling polymerase involved in repair of DNA double-strand breaks by non-homologous end joining (NHEJ). Participates in immunoglobulin (Ig) light chain gene rearrangement in V(D)J recombination. In Homo sapiens (Human), this protein is DNA-directed DNA/RNA polymerase mu (POLM).